Reading from the N-terminus, the 266-residue chain is Small ribosomal subunit protein uS3m (266 aa).

The protein belongs to the universal ribosomal protein uS3 family.

The protein localises to the mitochondrion. This Mycosarcoma maydis (Corn smut fungus) protein is Small ribosomal subunit protein uS3m (MRPS3).